Here is a 293-residue protein sequence, read N- to C-terminus: 33 kDa chaperonin (293 aa).

2 disulfide bridges follow: Cys-236–Cys-238 and Cys-269–Cys-272.

This sequence belongs to the HSP33 family. In terms of processing, under oxidizing conditions two disulfide bonds are formed involving the reactive cysteines. Under reducing conditions zinc is bound to the reactive cysteines and the protein is inactive.

It localises to the cytoplasm. Functionally, redox regulated molecular chaperone. Protects both thermally unfolding and oxidatively damaged proteins from irreversible aggregation. Plays an important role in the bacterial defense system toward oxidative stress. In Lactobacillus delbrueckii subsp. bulgaricus (strain ATCC 11842 / DSM 20081 / BCRC 10696 / JCM 1002 / NBRC 13953 / NCIMB 11778 / NCTC 12712 / WDCM 00102 / Lb 14), this protein is 33 kDa chaperonin.